The primary structure comprises 392 residues: MLLDSRFPTDYYLRILELVIRDASCKLVYNRRLHMLEAIPLDQKLSTDQEGESSILREVISELLAHSGESYAISAQLLAVIDIYLKQEQPSNSWFARIFRKRERARKRQTINKLLLLKSILFFERQRPVKKVESVADSILQRSKGNFSSWDDFTHDVQTQKSGRETDMPDSLRGRVEEDAASQMIVEVLLAFLDNQDMYLSVSFEILRNFLEEKVLSKRSLSPRSHEAIKKIKDLYLVSPEDFQTFIGGVITESLFQEEDQLVVGCMIFSQEGRELFDSWKGISQTYPHDMLYTQAFLAEVVLHVVQHHIHLNAKVKPTSPEQVGSLYSIRDHSPQAWARMMRVLLMRWLLDYHFDVYAHLKEEILRCPPRPPFWQMIPSESGDGTFRKEAR.

It belongs to the chlamydial CPn_0675/CT_696/TC_0068 family.

This is an uncharacterized protein from Chlamydia trachomatis serovar D (strain ATCC VR-885 / DSM 19411 / UW-3/Cx).